The chain runs to 507 residues: ATP synthase subunit alpha (507 aa).

Position 170 to 177 (170 to 177 (GDRQTGKT)) interacts with ATP.

It belongs to the ATPase alpha/beta chains family. As to quaternary structure, F-type ATPases have 2 components, CF(1) - the catalytic core - and CF(0) - the membrane proton channel. CF(1) has five subunits: alpha(3), beta(3), gamma(1), delta(1), epsilon(1). CF(0) has three main subunits: a(1), b(2) and c(9-12). The alpha and beta chains form an alternating ring which encloses part of the gamma chain. CF(1) is attached to CF(0) by a central stalk formed by the gamma and epsilon chains, while a peripheral stalk is formed by the delta and b chains.

It is found in the cell inner membrane. It carries out the reaction ATP + H2O + 4 H(+)(in) = ADP + phosphate + 5 H(+)(out). Produces ATP from ADP in the presence of a proton gradient across the membrane. The alpha chain is a regulatory subunit. The protein is ATP synthase subunit alpha of Thermosipho africanus (strain TCF52B).